We begin with the raw amino-acid sequence, 120 residues long: Phosphoribosyl-ATP pyrophosphatase (120 aa).

Belongs to the PRA-PH family.

Its subcellular location is the cytoplasm. It catalyses the reaction 1-(5-phospho-beta-D-ribosyl)-ATP + H2O = 1-(5-phospho-beta-D-ribosyl)-5'-AMP + diphosphate + H(+). The protein operates within amino-acid biosynthesis; L-histidine biosynthesis; L-histidine from 5-phospho-alpha-D-ribose 1-diphosphate: step 2/9. The polypeptide is Phosphoribosyl-ATP pyrophosphatase (Methylibium petroleiphilum (strain ATCC BAA-1232 / LMG 22953 / PM1)).